A 367-amino-acid polypeptide reads, in one-letter code: Anthranilate phosphoribosyltransferase (367 aa).

A compositionally biased stretch (low complexity) spans 1–17 (MVLSSEASSAADHSAAA). The tract at residues 1 to 22 (MVLSSEASSAADHSAAAPIPTS) is disordered. 5-phospho-alpha-D-ribose 1-diphosphate is bound by residues Gly-104, 107–108 (GD), Thr-112, 114–117 (NLST), 132–140 (KHGNRAASS), and Gly-144. Gly-104 contacts anthranilate. Ser-116 contributes to the Mg(2+) binding site. Residue Asn-135 participates in anthranilate binding. Position 190 (Arg-190) interacts with anthranilate. 2 residues coordinate Mg(2+): Asp-248 and Glu-249.

It belongs to the anthranilate phosphoribosyltransferase family. As to quaternary structure, homodimer. Requires Mg(2+) as cofactor.

The enzyme catalyses N-(5-phospho-beta-D-ribosyl)anthranilate + diphosphate = 5-phospho-alpha-D-ribose 1-diphosphate + anthranilate. The protein operates within amino-acid biosynthesis; L-tryptophan biosynthesis; L-tryptophan from chorismate: step 2/5. Functionally, catalyzes the transfer of the phosphoribosyl group of 5-phosphorylribose-1-pyrophosphate (PRPP) to anthranilate to yield N-(5'-phosphoribosyl)-anthranilate (PRA). This is Anthranilate phosphoribosyltransferase from Mycobacterium marinum (strain ATCC BAA-535 / M).